The sequence spans 587 residues: Arginine--tRNA ligase (587 aa).

A 'HIGH' region motif is present at residues 127 to 137 (PNLAKEMHVGH).

This sequence belongs to the class-I aminoacyl-tRNA synthetase family. Monomer.

The protein resides in the cytoplasm. It carries out the reaction tRNA(Arg) + L-arginine + ATP = L-arginyl-tRNA(Arg) + AMP + diphosphate. The polypeptide is Arginine--tRNA ligase (Pseudomonas paraeruginosa (strain DSM 24068 / PA7) (Pseudomonas aeruginosa (strain PA7))).